A 160-amino-acid chain; its full sequence is Transcription elongation factor GreA (160 aa).

Positions 49 to 75 (SEYDEAKNDQAFTEGKILQLENKLKNA) form a coiled coil.

It belongs to the GreA/GreB family.

In terms of biological role, necessary for efficient RNA polymerase transcription elongation past template-encoded arresting sites. The arresting sites in DNA have the property of trapping a certain fraction of elongating RNA polymerases that pass through, resulting in locked ternary complexes. Cleavage of the nascent transcript by cleavage factors such as GreA or GreB allows the resumption of elongation from the new 3'terminus. GreA releases sequences of 2 to 3 nucleotides. This chain is Transcription elongation factor GreA, found in Clostridium botulinum (strain Eklund 17B / Type B).